The following is a 1319-amino-acid chain: DNA-directed RNA polymerase subunit beta' (1319 aa).

Residues cysteine 60, cysteine 62, cysteine 75, and cysteine 78 each contribute to the Zn(2+) site. Positions 535, 537, and 539 each coordinate Mg(2+). Residues cysteine 890, cysteine 971, cysteine 978, and cysteine 981 each coordinate Zn(2+).

This sequence belongs to the RNA polymerase beta' chain family. In terms of assembly, the RNAP catalytic core consists of 2 alpha, 1 beta, 1 beta' and 1 omega subunit. When a sigma factor is associated with the core the holoenzyme is formed, which can initiate transcription. Mg(2+) is required as a cofactor. The cofactor is Zn(2+).

The catalysed reaction is RNA(n) + a ribonucleoside 5'-triphosphate = RNA(n+1) + diphosphate. DNA-dependent RNA polymerase catalyzes the transcription of DNA into RNA using the four ribonucleoside triphosphates as substrates. The chain is DNA-directed RNA polymerase subunit beta' from Mycobacteroides abscessus (strain ATCC 19977 / DSM 44196 / CCUG 20993 / CIP 104536 / JCM 13569 / NCTC 13031 / TMC 1543 / L948) (Mycobacterium abscessus).